The following is a 146-amino-acid chain: Ferric uptake regulation protein 2 (146 aa).

Zn(2+) contacts are provided by cysteine 96 and cysteine 99.

This sequence belongs to the Fur family.

The protein resides in the cytoplasm. Functionally, acts as a global negative controlling element, employing Fe(2+) as a cofactor to bind the operator of the repressed genes. This chain is Ferric uptake regulation protein 2 (fur2), found in Mycolicibacterium fortuitum (Mycobacterium fortuitum).